The sequence spans 56 residues: Ovomucoid (56 aa).

In terms of domain architecture, Kazal-like spans V6–C56. 3 cysteine pairs are disulfide-bonded: C8–C38, C16–C35, and C24–C56. A glycan (N-linked (GlcNAc...) asparagine) is linked at N45.

The protein resides in the secreted. The chain is Ovomucoid from Oreortyx pictus (Mountain quail).